Reading from the N-terminus, the 140-residue chain is Putative pre-16S rRNA nuclease (140 aa).

The protein belongs to the YqgF nuclease family.

The protein resides in the cytoplasm. Functionally, could be a nuclease involved in processing of the 5'-end of pre-16S rRNA. The sequence is that of Putative pre-16S rRNA nuclease from Parabacteroides distasonis (strain ATCC 8503 / DSM 20701 / CIP 104284 / JCM 5825 / NCTC 11152).